The primary structure comprises 163 residues: Early nodulin-like protein 20 (163 aa).

A signal peptide spans 1–25 (MMGKYLWALVYVTVMILIIVVEVES). Residues 26-126 (SLHRVGGGRY…GMKLAITVLP (101 aa)) form the Phytocyanin domain. N-linked (GlcNAc...) asparagine glycosylation is found at asparagine 42, asparagine 63, asparagine 73, asparagine 88, and asparagine 135. Residues cysteine 80 and cysteine 114 are joined by a disulfide bond. A lipid anchor (GPI-anchor amidated serine) is attached at serine 138. The propeptide at 139–163 (TTTPLIPPNAITAAILIFAFKALLL) is removed in mature form.

It belongs to the early nodulin-like (ENODL) family.

It localises to the cell membrane. In terms of biological role, may act as a carbohydrate transporter. The protein is Early nodulin-like protein 20 of Arabidopsis thaliana (Mouse-ear cress).